Consider the following 248-residue polypeptide: tRNA (guanine-N(1)-)-methyltransferase (248 aa).

S-adenosyl-L-methionine-binding positions include G113 and 133 to 138 (IGDYVL).

Belongs to the RNA methyltransferase TrmD family. Homodimer.

Its subcellular location is the cytoplasm. The enzyme catalyses guanosine(37) in tRNA + S-adenosyl-L-methionine = N(1)-methylguanosine(37) in tRNA + S-adenosyl-L-homocysteine + H(+). In terms of biological role, specifically methylates guanosine-37 in various tRNAs. This chain is tRNA (guanine-N(1)-)-methyltransferase, found in Shewanella loihica (strain ATCC BAA-1088 / PV-4).